A 336-amino-acid polypeptide reads, in one-letter code: MEQIHGGDSNSGGGGGGSSRNDEISVTRASRFDALPEDCISKVISHTSPRDACVVASVSKSVKSAAQSDLVWEMFLPSEYSSLVLQSANHLSKKEIFLSLADNSVLVENGKKSFWVEKASGKKCYMLSAMELTIIWGDSPAYWKWITVPESKFEKVAELRNVCWFEVRGKISCGMLSKGTHYSVYVVFKTANGRSYGFDLVPVEAGVGFVGKVATKKSVYFESGNADSRSATSHYSGISYAMVSRAFRMRRPWMQVQREEEEEVEGERERGMNVVGPKERVDGWSEVELGKFYINNGGCGDDGSDEIEISIMETQNGNWKSGLIIQGIEIRPERSN.

Positions 1-22 (MEQIHGGDSNSGGGGGGSSRND) are disordered. Over residues 9-18 (SNSGGGGGGS) the composition is skewed to gly residues. The F-box domain occupies 29-75 (ASRFDALPEDCISKVISHTSPRDACVVASVSKSVKSAAQSDLVWEMF).

As to quaternary structure, part of a SCF (ASK-cullin-F-box) protein ligase complex. Interacts with SKP1A/ASK1 and SPK1B/ASK2.

The protein localises to the nucleus. The protein operates within protein modification; protein ubiquitination. In terms of biological role, component of SCF(ASK-cullin-F-box) E3 ubiquitin ligase complexes, which may mediate the ubiquitination and subsequent proteasomal degradation of target proteins. The polypeptide is F-box protein PP2-B1 (PP2B1) (Arabidopsis thaliana (Mouse-ear cress)).